Consider the following 466-residue polypeptide: Coagulation factor IX (466 aa).

A signal peptide spans 1 to 25 (MRCLNMIMAEPPGLITICLLGYLLG). The propeptide occupies 26–46 (ADCTVFLDHEDATKVLSRPKR). 11 residues coordinate Ca(2+): Tyr-47, Asn-48, Glu-53, Glu-54, Glu-61, Glu-63, Glu-66, Glu-67, Glu-72, Glu-73, and Glu-76. The Gla domain maps to 47–92 (YNSGKLEEFVQGNLERECMEEKCSFEEAREVFENTEKTTEFWKQYV). 4-carboxyglutamate is present on residues Glu-53, Glu-54, Glu-61, Glu-63, Glu-66, Glu-67, Glu-72, Glu-73, Glu-76, Glu-79, and Glu-82. Glu-61 provides a ligand contact to Mg(2+). Cys-64 and Cys-69 are disulfide-bonded. Glu-66 serves as a coordination point for Mg(2+). Residue Glu-72 coordinates Mg(2+). Position 76 (Glu-76) interacts with Mg(2+). Position 82 (Glu-82) interacts with Ca(2+). Glu-82 serves as a coordination point for Mg(2+). An O-linked (GalNAc...) threonine glycan is attached at Thr-85. Residues Glu-86, Asp-93, Gly-94, and Gln-96 each coordinate Ca(2+). Glu-86 carries the 4-carboxyglutamate modification. Mg(2+) is bound at residue Glu-86. Positions 93 to 129 (DGDQCESNPCLNGGICKDDINSYECWCQTGFEGKNCE) constitute an EGF-like 1; calcium-binding domain. Disulfide bonds link Cys-97/Cys-108, Cys-102/Cys-117, Cys-119/Cys-128, Cys-134/Cys-145, Cys-141/Cys-155, Cys-157/Cys-170, Cys-178/Cys-340, Cys-257/Cys-273, Cys-387/Cys-401, and Cys-412/Cys-440. Ser-99 is a glycosylation site (O-linked (Glc...) serine). The Ca(2+) site is built by Asp-110 and Asp-111. Asp-110 is subject to (3R)-3-hydroxyaspartate. A Phosphoserine modification is found at Ser-114. One can recognise an EGF-like 2 domain in the interval 130–171 (LDVTCNIKNGRCKQFCKLDADNKVVCSCTTGYQLAEDQKSCE). Residues 193 to 231 (AETLFLNMDYENSTTDYENSAEAEKNVDNVTQPLNDLTR) constitute a propeptide, activation peptide. The residue at position 202 (Tyr-202) is a Sulfotyrosine. Phosphoserine is present on Ser-205. Residue Thr-206 is modified to Phosphothreonine; alternate. The O-linked (GalNAc...) threonine; alternate glycan is linked to Thr-206. Asn-221 carries N-linked (GlcNAc...) asparagine glycosylation. Residues Thr-223 and Thr-230 are each glycosylated (O-linked (GalNAc...) threonine). The 233-residue stretch at 232–464 (IVGGKTAKPG…YVNWIKEKTK (233 aa)) folds into the Peptidase S1 domain. His-272 acts as the Charge relay system in catalysis. Residues Glu-286, Asn-288, Glu-291, Glu-293, and Glu-296 each contribute to the Ca(2+) site. Asp-320 functions as the Charge relay system in the catalytic mechanism. Ser-416 acts as the Charge relay system in catalysis.

This sequence belongs to the peptidase S1 family. Heterodimer of a light chain and a heavy chain; disulfide-linked. Interacts (inactive and activated) with F11 (activated) in calcium-dependent manner. Interacts with SERPINC1. In terms of processing, the iron and 2-oxoglutarate dependent 3-hydroxylation of aspartate and asparagine is (R) stereospecific within EGF domains. Activated by factor XIa, which excises the activation peptide. The propeptide can also be removed by snake venom protease. Activated by coagulation factor VIIa-tissue factor (F7-F3) complex in calcium-dependent manner. Post-translationally, predominantly O-glucosylated at Ser-99 by POGLUT1 in vitro.

It localises to the secreted. It carries out the reaction Selective cleavage of Arg-|-Ile bond in factor X to form factor Xa.. In terms of biological role, factor IX is a vitamin K-dependent plasma protein that participates in the intrinsic pathway of blood coagulation by converting factor X to its active form in the presence of Ca(2+) ions, phospholipids, and factor VIIIa. The polypeptide is Coagulation factor IX (F9) (Felis catus (Cat)).